Reading from the N-terminus, the 343-residue chain is 4-hydroxy-2-oxovalerate aldolase (343 aa).

Residues 4 to 254 form the Pyruvate carboxyltransferase domain; that stretch reads PRLTDTTLRD…NPGLDVFGLM (251 aa). Residue 12–13 participates in substrate binding; it reads RD. D13 is a Mn(2+) binding site. The Proton acceptor role is filled by H16. The substrate site is built by S166 and H193. Mn(2+) is bound by residues H193 and H195. Y284 provides a ligand contact to substrate.

This sequence belongs to the 4-hydroxy-2-oxovalerate aldolase family.

It carries out the reaction (S)-4-hydroxy-2-oxopentanoate = acetaldehyde + pyruvate. The polypeptide is 4-hydroxy-2-oxovalerate aldolase (Chloroflexus aggregans (strain MD-66 / DSM 9485)).